We begin with the raw amino-acid sequence, 111 residues long: Large ribosomal subunit protein uL22 (111 aa).

The protein belongs to the universal ribosomal protein uL22 family. Part of the 50S ribosomal subunit.

In terms of biological role, this protein binds specifically to 23S rRNA; its binding is stimulated by other ribosomal proteins, e.g. L4, L17, and L20. It is important during the early stages of 50S assembly. It makes multiple contacts with different domains of the 23S rRNA in the assembled 50S subunit and ribosome. Its function is as follows. The globular domain of the protein is located near the polypeptide exit tunnel on the outside of the subunit, while an extended beta-hairpin is found that lines the wall of the exit tunnel in the center of the 70S ribosome. This is Large ribosomal subunit protein uL22 from Clostridium perfringens (strain ATCC 13124 / DSM 756 / JCM 1290 / NCIMB 6125 / NCTC 8237 / Type A).